The following is a 268-amino-acid chain: MAVGKNKGLSKGGKKGGKKKVIDPFSRKDWYDVKAPNMFQTRQIGKTLVNRTQGQRIASDYLKGRVFEVSLADLQKDIDPERSFRKFRLIAEDVQDRNVLCNFHGMDLTTDKYRSMVKKWQTLIEAIVEAKTVDGYLLRVFCIGFTAKDQQSQRKTCYAQQSQVRKIRARMTDIINNEVSGADLKQLVNKLALDSIAKDIEKSCQRIYPLHDVYIRKVKVLKKPRFDISKLLELHGDGGGKTSEAVVSAEGAVVDRPEGYEPPVQEAV.

Residues Met-1–Val-21 form a disordered region.

It belongs to the eukaryotic ribosomal protein eS1 family. As to quaternary structure, component of the small ribosomal subunit. Mature ribosomes consist of a small (40S) and a large (60S) subunit. The 40S subunit contains about 33 different proteins and 1 molecule of RNA (18S). The 60S subunit contains about 49 different proteins and 3 molecules of RNA (28S, 5.8S and 5S).

It localises to the cytoplasm. Functionally, essential for oogenesis; required for late follicle cell development. This chain is Small ribosomal subunit protein eS1, found in Drosophila willistoni (Fruit fly).